Consider the following 322-residue polypeptide: Undecaprenyl-phosphate 4-deoxy-4-formamido-L-arabinose transferase (322 aa).

At 1 to 235 (MFEIHPVKKV…TCLTTTPLRM (235 aa)) the chain is on the cytoplasmic side. Residues 236–256 (LSLLGSIIAIGGFSIAVLLVI) form a helical membrane-spanning segment. Over 257-269 (LRLTFGPQWAAEG) the chain is Periplasmic. A helical membrane pass occupies residues 270-290 (VFMLFAVLFTFIGAQFIGMGL). Over 291 to 322 (LGEYIGRIYTDVRARPRYFVQQVIRPSSKENE) the chain is Cytoplasmic.

This sequence belongs to the glycosyltransferase 2 family.

The protein localises to the cell inner membrane. It catalyses the reaction UDP-4-deoxy-4-formamido-beta-L-arabinose + di-trans,octa-cis-undecaprenyl phosphate = 4-deoxy-4-formamido-alpha-L-arabinopyranosyl di-trans,octa-cis-undecaprenyl phosphate + UDP. It participates in glycolipid biosynthesis; 4-amino-4-deoxy-alpha-L-arabinose undecaprenyl phosphate biosynthesis; 4-amino-4-deoxy-alpha-L-arabinose undecaprenyl phosphate from UDP-4-deoxy-4-formamido-beta-L-arabinose and undecaprenyl phosphate: step 1/2. It functions in the pathway bacterial outer membrane biogenesis; lipopolysaccharide biosynthesis. Its function is as follows. Catalyzes the transfer of 4-deoxy-4-formamido-L-arabinose from UDP to undecaprenyl phosphate. The modified arabinose is attached to lipid A and is required for resistance to polymyxin and cationic antimicrobial peptides. The chain is Undecaprenyl-phosphate 4-deoxy-4-formamido-L-arabinose transferase from Escherichia coli (strain SMS-3-5 / SECEC).